A 192-amino-acid polypeptide reads, in one-letter code: tRNA (pseudouridine(54)-N(1))-methyltransferase (192 aa).

Residues Leu114 and Gly138 each coordinate S-adenosyl-L-methionine.

The protein belongs to the methyltransferase superfamily. TrmY family. In terms of assembly, homodimer.

The protein resides in the cytoplasm. It carries out the reaction pseudouridine(54) in tRNA + S-adenosyl-L-methionine = N(1)-methylpseudouridine(54) in tRNA + S-adenosyl-L-homocysteine + H(+). In terms of biological role, specifically catalyzes the N1-methylation of pseudouridine at position 54 (Psi54) in tRNAs. This Aeropyrum pernix (strain ATCC 700893 / DSM 11879 / JCM 9820 / NBRC 100138 / K1) protein is tRNA (pseudouridine(54)-N(1))-methyltransferase.